Consider the following 251-residue polypeptide: tRNA (guanine-N(1)-)-methyltransferase (251 aa).

S-adenosyl-L-methionine-binding positions include Gly-117 and 137–142 (IGDYVL).

Belongs to the RNA methyltransferase TrmD family. As to quaternary structure, homodimer.

The protein localises to the cytoplasm. It carries out the reaction guanosine(37) in tRNA + S-adenosyl-L-methionine = N(1)-methylguanosine(37) in tRNA + S-adenosyl-L-homocysteine + H(+). Functionally, specifically methylates guanosine-37 in various tRNAs. The polypeptide is tRNA (guanine-N(1)-)-methyltransferase (Actinobacillus pleuropneumoniae serotype 5b (strain L20)).